Consider the following 142-residue polypeptide: Hemoglobin subunit zeta (142 aa).

Ser2 is modified (N-acetylserine). Residues Ser2 to Arg142 enclose the Globin domain. At Ser53 the chain carries Phosphoserine. His59 is a binding site for heme b. A Phosphoserine modification is found at Ser73. His88 contributes to the heme b binding site.

It belongs to the globin family. In terms of assembly, heterotetramer of two zeta chains and beta-type chains.

The zeta chain is an alpha-type chain of mammalian embryonic hemoglobin. The chain is Hemoglobin subunit zeta (HBZ1) from Equus caballus (Horse).